A 212-amino-acid polypeptide reads, in one-letter code: Leucyl/phenylalanyl-tRNA--protein transferase (212 aa).

This sequence belongs to the L/F-transferase family.

Its subcellular location is the cytoplasm. It catalyses the reaction N-terminal L-lysyl-[protein] + L-leucyl-tRNA(Leu) = N-terminal L-leucyl-L-lysyl-[protein] + tRNA(Leu) + H(+). The catalysed reaction is N-terminal L-arginyl-[protein] + L-leucyl-tRNA(Leu) = N-terminal L-leucyl-L-arginyl-[protein] + tRNA(Leu) + H(+). The enzyme catalyses L-phenylalanyl-tRNA(Phe) + an N-terminal L-alpha-aminoacyl-[protein] = an N-terminal L-phenylalanyl-L-alpha-aminoacyl-[protein] + tRNA(Phe). Functionally, functions in the N-end rule pathway of protein degradation where it conjugates Leu, Phe and, less efficiently, Met from aminoacyl-tRNAs to the N-termini of proteins containing an N-terminal arginine or lysine. This chain is Leucyl/phenylalanyl-tRNA--protein transferase, found in Flavobacterium johnsoniae (strain ATCC 17061 / DSM 2064 / JCM 8514 / BCRC 14874 / CCUG 350202 / NBRC 14942 / NCIMB 11054 / UW101) (Cytophaga johnsonae).